A 297-amino-acid chain; its full sequence is Glutamyl-Q tRNA(Asp) synthetase (297 aa).

L-glutamate contacts are provided by residues 7-11 and Glu-43; that span reads RFAPS. The short motif at 10–20 is the 'HIGH' region element; sequence PSPTGPLHFGS. The Zn(2+) site is built by Cys-99, Cys-101, Tyr-122, and Cys-126. Residues Tyr-182 and Arg-200 each contribute to the L-glutamate site. The 'KMSKS' region signature appears at 238–242; that stretch reads KLSKQ. ATP is bound at residue Lys-241.

The protein belongs to the class-I aminoacyl-tRNA synthetase family. GluQ subfamily. The cofactor is Zn(2+).

Its function is as follows. Catalyzes the tRNA-independent activation of glutamate in presence of ATP and the subsequent transfer of glutamate onto a tRNA(Asp). Glutamate is transferred on the 2-amino-5-(4,5-dihydroxy-2-cyclopenten-1-yl) moiety of the queuosine in the wobble position of the QUC anticodon. The polypeptide is Glutamyl-Q tRNA(Asp) synthetase (Burkholderia pseudomallei (strain K96243)).